Reading from the N-terminus, the 176-residue chain is Ribosome maturation factor RimM (176 aa).

A PRC barrel domain is found at 93 to 172; that stretch reads KDEFFYFDII…KIQVKNSLDI (80 aa).

The protein belongs to the RimM family. In terms of assembly, binds ribosomal protein uS19.

It localises to the cytoplasm. Its function is as follows. An accessory protein needed during the final step in the assembly of 30S ribosomal subunit, possibly for assembly of the head region. Essential for efficient processing of 16S rRNA. May be needed both before and after RbfA during the maturation of 16S rRNA. It has affinity for free ribosomal 30S subunits but not for 70S ribosomes. This chain is Ribosome maturation factor RimM, found in Campylobacter fetus subsp. fetus (strain 82-40).